Here is a 356-residue protein sequence, read N- to C-terminus: Acyl-coenzyme A diphosphatase NUDT19 (356 aa).

The 232-residue stretch at 10–241 (AATVMLAAGW…IWLAPPQFYE (232 aa)) folds into the Nudix hydrolase domain. Residues 72 to 94 (PRFGLGPEPPRQPPFPGLSHGDA) form a disordered region. A compositionally biased stretch (pro residues) spans 78–87 (PEPPRQPPFP). The Nudix box signature appears at 97–118 (AALPDDVALRICAIRETFEEAG). Residues glutamate 112 and glutamate 116 each coordinate Mg(2+). Lysine 299 is subject to N6-succinyllysine. The short motif at 354-356 (ARL) is the Microbody targeting signal element.

It belongs to the Nudix hydrolase family. As to quaternary structure, monomer. It depends on Mg(2+) as a cofactor. Mn(2+) is required as a cofactor.

The protein resides in the peroxisome. The enzyme catalyses an acyl-CoA + H2O = an acyl-4'-phosphopantetheine + adenosine 3',5'-bisphosphate + 2 H(+). The catalysed reaction is CoA + H2O = (R)-4'-phosphopantetheine + adenosine 3',5'-bisphosphate + 2 H(+). It catalyses the reaction hexanoyl-CoA + H2O = hexanoyl-4'-phosphopantetheine + adenosine 3',5'-bisphosphate + 2 H(+). It carries out the reaction octanoyl-CoA + H2O = S-octanoyl-4'-phosphopantetheine + adenosine 3',5'-bisphosphate + 2 H(+). The enzyme catalyses butanoyl-CoA + H2O = S-butanoyl-4'-phosphopantetheine + adenosine 3',5'-bisphosphate + 2 H(+). The catalysed reaction is propanoyl-CoA + H2O = propanoyl-4'-phosphopantetheine + adenosine 3',5'-bisphosphate + 2 H(+). It catalyses the reaction malonyl-CoA + H2O = malonyl-4'-phosphopantetheine + adenosine 3',5'-bisphosphate + 2 H(+). It carries out the reaction succinyl-CoA + H2O = succinyl-4'-phosphopantetheine + adenosine 3',5'-bisphosphate + 2 H(+). The enzyme catalyses choloyl-CoA + H2O = S-choloyl-4'-phosphopantetheine + adenosine 3',5'-bisphosphate + 2 H(+). The catalysed reaction is 4,8-dimethylnonanoyl-CoA + H2O = S-(4,8-dimethylnonanoyl)-4'-phosphopantetheine + adenosine 3',5'-bisphosphate + 2 H(+). It catalyses the reaction (9Z,12Z,15Z)-octadecatrienoyl-CoA + H2O = S-(9Z,12Z,15Z-octadecatrienoyl)-4'-phosphopantetheine + adenosine 3',5'-bisphosphate + 2 H(+). It carries out the reaction (9Z,12Z)-octadecadienoyl-CoA + H2O = S-(9Z,12Z-octadecadienoyl)-4'-phosphopantetheine + adenosine 3',5'-bisphosphate + 2 H(+). The enzyme catalyses (9Z)-hexadecenoyl-CoA + H2O = S-(9Z-hexadecenoyl)-4'-phosphopantetheine + adenosine 3',5'-bisphosphate + 2 H(+). The catalysed reaction is (9Z)-tetradecenoyl-CoA + H2O = S-(9Z-tetradecenoyl)-4'-phosphopantetheine + adenosine 3',5'-bisphosphate + 2 H(+). It catalyses the reaction (6Z)-octenoyl-CoA + H2O = S-(6Z-octenoyl)-4'-phosphopantetheine + adenosine 3',5'-bisphosphate + 2 H(+). It carries out the reaction hexadecanoyl-CoA + H2O = S-hexadecanoyl-4'-phosphopantetheine + adenosine 3',5'-bisphosphate + 2 H(+). The enzyme catalyses tetradecanoyl-CoA + H2O = tetradecanoyl-4'-phosphopantetheine + adenosine 3',5'-bisphosphate + 2 H(+). The catalysed reaction is dodecanoyl-CoA + H2O = S-dodecanoyl-4'-phosphopantetheine + adenosine 3',5'-bisphosphate + 2 H(+). It catalyses the reaction a 5'-end CoA-ribonucleoside in mRNA + H2O = a 5'-end phospho-adenosine-phospho-ribonucleoside in mRNA + (R)-4'-phosphopantetheine + 2 H(+). Functionally, fatty acyl-coenzyme A (CoA) diphosphatase that hydrolyzes fatty acyl-CoA to yield acyl-4'-phosphopantetheine and adenosine 3',5'-bisphosphate. Mediates the hydrolysis of a wide range of CoA esters, including choloyl-CoA and branched-chain fatty-acyl-CoA esters and at low substrate concentrations medium and long-chain fatty-acyl-CoA esters are the primary substrates. Highest activity seen with medium-chain acyl-CoA esters and higher rates of activity seen with the unsaturated acyl-CoA esters compared with the saturated esters. Exhibits decapping activity towards dpCoA-capped RNAs in vitro. This is Acyl-coenzyme A diphosphatase NUDT19 (Nudt19) from Mus saxicola (Brown spiny mouse).